Here is a 370-residue protein sequence, read N- to C-terminus: 3-dehydroquinate synthase (370 aa).

NAD(+)-binding positions include 108 to 112 (GVIGD), 132 to 133 (TT), lysine 145, and lysine 154. Zn(2+) contacts are provided by glutamate 187, histidine 249, and histidine 267.

It belongs to the sugar phosphate cyclases superfamily. Dehydroquinate synthase family. Co(2+) is required as a cofactor. Requires Zn(2+) as cofactor. NAD(+) serves as cofactor.

The protein localises to the cytoplasm. The catalysed reaction is 7-phospho-2-dehydro-3-deoxy-D-arabino-heptonate = 3-dehydroquinate + phosphate. The protein operates within metabolic intermediate biosynthesis; chorismate biosynthesis; chorismate from D-erythrose 4-phosphate and phosphoenolpyruvate: step 2/7. Functionally, catalyzes the conversion of 3-deoxy-D-arabino-heptulosonate 7-phosphate (DAHP) to dehydroquinate (DHQ). This chain is 3-dehydroquinate synthase, found in Cereibacter sphaeroides (strain ATCC 17025 / ATH 2.4.3) (Rhodobacter sphaeroides).